The primary structure comprises 231 residues: Flagellar L-ring protein (231 aa).

A signal peptide spans 1 to 18; that stretch reads MKHLLSVFALGGAVLLAG. The N-palmitoyl cysteine moiety is linked to residue cysteine 19. The S-diacylglycerol cysteine moiety is linked to residue cysteine 19.

It belongs to the FlgH family. The basal body constitutes a major portion of the flagellar organelle and consists of four rings (L,P,S, and M) mounted on a central rod.

The protein localises to the cell outer membrane. Its subcellular location is the bacterial flagellum basal body. Functionally, assembles around the rod to form the L-ring and probably protects the motor/basal body from shearing forces during rotation. This is Flagellar L-ring protein from Pseudomonas entomophila (strain L48).